The primary structure comprises 301 residues: Putative hydro-lyase C5H10.01 (301 aa).

This sequence belongs to the D-glutamate cyclase family.

The sequence is that of Putative hydro-lyase C5H10.01 from Schizosaccharomyces pombe (strain 972 / ATCC 24843) (Fission yeast).